Reading from the N-terminus, the 690-residue chain is Methionine--tRNA ligase (690 aa).

The 'HIGH' region signature appears at 13–23; the sequence is PYANGQIHIGH. C144, C147, C157, and C160 together coordinate Zn(2+). A 'KMSKS' region motif is present at residues 335–339; it reads KMSKS. K338 is a binding site for ATP. Residues 584–690 form the tRNA-binding domain; that stretch reads DFAKIDLRVA…SGAVPGMRIR (107 aa).

It belongs to the class-I aminoacyl-tRNA synthetase family. MetG type 1 subfamily. In terms of assembly, homodimer. The cofactor is Zn(2+).

Its subcellular location is the cytoplasm. The catalysed reaction is tRNA(Met) + L-methionine + ATP = L-methionyl-tRNA(Met) + AMP + diphosphate. Functionally, is required not only for elongation of protein synthesis but also for the initiation of all mRNA translation through initiator tRNA(fMet) aminoacylation. The sequence is that of Methionine--tRNA ligase from Cupriavidus metallidurans (strain ATCC 43123 / DSM 2839 / NBRC 102507 / CH34) (Ralstonia metallidurans).